The primary structure comprises 325 residues: Palmitoyltransferase PFA3 (325 aa).

The Cytoplasmic segment spans residues 1–8 (MHICSLIP). Residues 9-29 (ILFPKLLTCGLALYSAVVLWL) form a helical membrane-spanning segment. A topological domain (lumenal) is located at residue lysine 30. The chain crosses the membrane as a helical span at residues 31-51 (VSVIGSFIQGTVLLTLVPLIL). The Cytoplasmic segment spans residues 52–147 (YAYFSTIAVG…PGCIGYNNHK (96 aa)). A DHHC domain is found at 104 to 154 (RYCVKCKVWKPDRCHHCSACDKCYLRRDHHCVWFPGCIGYNNHKFFLHFLL). Residues 148 to 168 (FFLHFLLYASVYAFWICIITT) form a helical membrane-spanning segment. Residues 169 to 188 (WDLVVWFRAHSYERELLNVH) are Lumenal-facing. Residues 189–209 (LVCLWALSAAATVALTAFCAF) form a helical membrane-spanning segment. Over 210-325 (NIYLVCKNET…TRFNSKRAVQ (116 aa)) the chain is Cytoplasmic.

This sequence belongs to the DHHC palmitoyltransferase family. PFA3 subfamily. Autopalmitoylated.

Its subcellular location is the vacuole membrane. The enzyme catalyses L-cysteinyl-[protein] + hexadecanoyl-CoA = S-hexadecanoyl-L-cysteinyl-[protein] + CoA. Palmitoyltransferase specific for VAC8. Palmitoylates VAC8 at one or more of its N-terminal cysteine residues, which is required for its proper membrane localization. The polypeptide is Palmitoyltransferase PFA3 (PFA3) (Eremothecium gossypii (strain ATCC 10895 / CBS 109.51 / FGSC 9923 / NRRL Y-1056) (Yeast)).